Here is a 156-residue protein sequence, read N- to C-terminus: Small ribosomal subunit protein bS16 (156 aa).

2 stretches are compositionally biased toward low complexity: residues 113–123 (AESGTTAAATT) and 137–156 (EAPAEAAEAPAEAADAASES). A disordered region spans residues 113-156 (AESGTTAAATTPKKKKAPKKDEAAEAPAEAAEAPAEAADAASES).

The protein belongs to the bacterial ribosomal protein bS16 family.

The polypeptide is Small ribosomal subunit protein bS16 (Mycolicibacterium smegmatis (strain ATCC 700084 / mc(2)155) (Mycobacterium smegmatis)).